We begin with the raw amino-acid sequence, 161 residues long: Transcriptional regulator MraZ (161 aa).

SpoVT-AbrB domains are found at residues 7 to 55 and 84 to 127; these read RYTN…GPAF and SAEL…EPGA.

Belongs to the MraZ family. In terms of assembly, forms oligomers.

It localises to the cytoplasm. The protein resides in the nucleoid. The chain is Transcriptional regulator MraZ from Parvibaculum lavamentivorans (strain DS-1 / DSM 13023 / NCIMB 13966).